The following is a 714-amino-acid chain: ATP-dependent DNA helicase DinG (714 aa).

Residues 17–294 (ALQDQIPDFI…TCMEQFRPKT (278 aa)) enclose the Helicase ATP-binding domain. 54 to 61 (APTGVGKT) contacts ATP. 4 residues coordinate [4Fe-4S] cluster: C120, C194, C199, and C205. Positions 248–251 (DEGH) match the DEAH box motif. The Helicase C-terminal domain maps to 517-698 (HIAEMAAYFR…VFPIEQPAVP (182 aa)).

This sequence belongs to the helicase family. DinG subfamily. Type 1 sub-subfamily. [4Fe-4S] cluster serves as cofactor.

The catalysed reaction is Couples ATP hydrolysis with the unwinding of duplex DNA at the replication fork by translocating in the 5'-3' direction. This creates two antiparallel DNA single strands (ssDNA). The leading ssDNA polymer is the template for DNA polymerase III holoenzyme which synthesizes a continuous strand.. It catalyses the reaction ATP + H2O = ADP + phosphate + H(+). In terms of biological role, DNA-dependent ATPase and 5'-3' DNA helicase. Unwinds D-loops, R-loops, forked DNA and G-quadruplex DNA. The chain is ATP-dependent DNA helicase DinG from Salmonella paratyphi A (strain ATCC 9150 / SARB42).